The following is a 466-amino-acid chain: MTYAPVTDVLSGKLAVDSEVTVRGWIRSRRDSKAGISFLAIYDGSCFDPIQAVVPNELNNYQEEVLKLTTGCSVEVTGKIVESPAKGQDFELAATEVKVVGLVEDPDTYPMAKTRHSIEYLREVAHLRPRTNIIGAVARVRNCLSQAIHRFYHEQGFFWMSAPLITASDCEGAGEMFRVSTLDMANVPMTDAGEVDYDKDFFGKETFLTVSGQLNAETYACALSKVYTFGPTFRAENSNTSRHLAEFWMVEPEVAFADLDDAAKLAEDMLKYVFKAVLEERRDDLEFFAQRINKEAITRLEQFVTSDFAQVDYTDAIQILQDSGRKFEFDVEWGIDMSSEHERYLAEEHFKAPVVVKNYPKDIKAFYMRMNDDGKTVAAMDVLAPGIGEIIGGSQREERLEHLDKRIAEMGIDASHIEWYRDLRRYGTVPHSGFGLGFERLVTYVTGMQNIRDVIPFPRAPRSANF.

This sequence belongs to the class-II aminoacyl-tRNA synthetase family. Homodimer.

The protein resides in the cytoplasm. The enzyme catalyses tRNA(Asn) + L-asparagine + ATP = L-asparaginyl-tRNA(Asn) + AMP + diphosphate + H(+). This is Asparagine--tRNA ligase from Photobacterium profundum (strain SS9).